The primary structure comprises 291 residues: 33 kDa chaperonin (291 aa).

2 cysteine pairs are disulfide-bonded: cysteine 229/cysteine 231 and cysteine 262/cysteine 265.

The protein belongs to the HSP33 family. Under oxidizing conditions two disulfide bonds are formed involving the reactive cysteines. Under reducing conditions zinc is bound to the reactive cysteines and the protein is inactive.

Its subcellular location is the cytoplasm. Redox regulated molecular chaperone. Protects both thermally unfolding and oxidatively damaged proteins from irreversible aggregation. Plays an important role in the bacterial defense system toward oxidative stress. The protein is 33 kDa chaperonin of Aliivibrio fischeri (strain ATCC 700601 / ES114) (Vibrio fischeri).